Reading from the N-terminus, the 148-residue chain is Large ribosomal subunit protein bL9 (148 aa).

It belongs to the bacterial ribosomal protein bL9 family.

Its function is as follows. Binds to the 23S rRNA. In Bacillus cereus (strain G9842), this protein is Large ribosomal subunit protein bL9.